We begin with the raw amino-acid sequence, 196 residues long: Potassium-transporting ATPase KdpC subunit (196 aa).

Residues 17-37 (LLLLVATAGLGLVYPLAVFAV) form a helical membrane-spanning segment. The interval 73–93 (QPRPSAAGDGYDPTASGASNL) is disordered.

This sequence belongs to the KdpC family. The system is composed of three essential subunits: KdpA, KdpB and KdpC.

It localises to the cell membrane. Functionally, part of the high-affinity ATP-driven potassium transport (or Kdp) system, which catalyzes the hydrolysis of ATP coupled with the electrogenic transport of potassium into the cytoplasm. This subunit acts as a catalytic chaperone that increases the ATP-binding affinity of the ATP-hydrolyzing subunit KdpB by the formation of a transient KdpB/KdpC/ATP ternary complex. The chain is Potassium-transporting ATPase KdpC subunit from Kineococcus radiotolerans (strain ATCC BAA-149 / DSM 14245 / SRS30216).